The chain runs to 427 residues: D-inositol 3-phosphate glycosyltransferase (427 aa).

A 1D-myo-inositol 3-phosphate-binding site is contributed by His-12. Residues 18 to 19 (QP) and Gly-26 contribute to the UDP-N-acetyl-alpha-D-glucosamine site. Residues 23–28 (DAGGMN), Lys-81, Tyr-113, Thr-137, and Arg-157 each bind 1D-myo-inositol 3-phosphate. Residues Arg-234, Lys-239, and Arg-297 each contribute to the UDP-N-acetyl-alpha-D-glucosamine site. Mg(2+) contacts are provided by Tyr-306, Gln-307, and Ala-309. Glu-319 and Glu-327 together coordinate UDP-N-acetyl-alpha-D-glucosamine. Thr-333 serves as a coordination point for Mg(2+).

This sequence belongs to the glycosyltransferase group 1 family. MshA subfamily. Homodimer.

It catalyses the reaction 1D-myo-inositol 3-phosphate + UDP-N-acetyl-alpha-D-glucosamine = 1D-myo-inositol 2-acetamido-2-deoxy-alpha-D-glucopyranoside 3-phosphate + UDP + H(+). Its function is as follows. Catalyzes the transfer of a N-acetyl-glucosamine moiety to 1D-myo-inositol 3-phosphate to produce 1D-myo-inositol 2-acetamido-2-deoxy-glucopyranoside 3-phosphate in the mycothiol biosynthesis pathway. This chain is D-inositol 3-phosphate glycosyltransferase, found in Corynebacterium diphtheriae (strain ATCC 700971 / NCTC 13129 / Biotype gravis).